Consider the following 204-residue polypeptide: Holliday junction branch migration complex subunit RuvA (204 aa).

Residues methionine 1–arginine 64 form a domain I region. The segment at threonine 65–proline 143 is domain II. A flexible linker region spans residues alanine 144–glutamate 153. A domain III region spans residues glutamate 153–glycine 204.

It belongs to the RuvA family. As to quaternary structure, homotetramer. Forms an RuvA(8)-RuvB(12)-Holliday junction (HJ) complex. HJ DNA is sandwiched between 2 RuvA tetramers; dsDNA enters through RuvA and exits via RuvB. An RuvB hexamer assembles on each DNA strand where it exits the tetramer. Each RuvB hexamer is contacted by two RuvA subunits (via domain III) on 2 adjacent RuvB subunits; this complex drives branch migration. In the full resolvosome a probable DNA-RuvA(4)-RuvB(12)-RuvC(2) complex forms which resolves the HJ.

It is found in the cytoplasm. Its function is as follows. The RuvA-RuvB-RuvC complex processes Holliday junction (HJ) DNA during genetic recombination and DNA repair, while the RuvA-RuvB complex plays an important role in the rescue of blocked DNA replication forks via replication fork reversal (RFR). RuvA specifically binds to HJ cruciform DNA, conferring on it an open structure. The RuvB hexamer acts as an ATP-dependent pump, pulling dsDNA into and through the RuvAB complex. HJ branch migration allows RuvC to scan DNA until it finds its consensus sequence, where it cleaves and resolves the cruciform DNA. The sequence is that of Holliday junction branch migration complex subunit RuvA from Halorhodospira halophila (strain DSM 244 / SL1) (Ectothiorhodospira halophila (strain DSM 244 / SL1)).